Reading from the N-terminus, the 501-residue chain is Cytochrome P450 monooxygenase ccsG (501 aa).

An N-terminal signal peptide occupies residues 1-28 (MMITLFTLAVVSIGFFLWWLLTVQPAVT). N-linked (GlcNAc...) asparagine glycans are attached at residues N115 and N154. Residue C443 participates in heme binding.

It belongs to the cytochrome P450 family. Heme is required as a cofactor.

The protein operates within mycotoxin biosynthesis. Its function is as follows. Cytochrome P450 monooxygenase; part of the gene cluster that mediates the biosynthesis of a family of the mycotoxins cytochalasins E and K. The hybrid PKS-NRPS synthetase ccsA and the enoyl reductase ccsC are responsible for fusion of phenylalanine with an octaketide backbone and subsequent release of the stable tetramic acid precursor. The polyketide synthase module (PKS) of the PKS-NRPS ccsA is responsible for the synthesis of the octaketide backbone. The downstream nonribosomal peptide synthetase (NRPS) amidates the carboxyl end of the octaketide with a phenylalanine. A reductase-like domain (R) at the C-terminus catalyzes the reductive release of the polyketide-amino acid intermediate. Because ccsA lacks a designated enoylreductase (ER) domain, the required activity is provided the enoyl reductase ccsC. Upon formation of the 11-membered carbocycle-fused perhydroisoindolone intermediate, a number of oxidative steps are required to afford the final cytochalasin E and K, including two hydroxylations at C17 and C18, one alcohol oxidation at C17, one epoxidation at C6 and C7 and two Baeyer-Villiger oxidations. The oxidative modification at C17, C18 and the C6-C7 epoxidation are likely to be catalyzed by the two cytochrome P450 oxygenases ccsD and ccsG. CcsD may be responsible for the epoxidation of the C6-C7 double bond. CcsG may be responsible for the successive oxidative modifications at C17 and C18. The double Baeyer-Villiger oxidations of ketocytochalasin to precytochalasin and cytochalasin Z(16) are among the final steps leading to cytochalasin E and K and are catalyzed by ccsB. The first oxygen insertion step follows that of the classic BVMO mechanism, generating the ester precytochalasin. Release of precytochalasin into an aqueous environment can generate the shunt product iso-precytochalasin through spontaneous isomerization. Alternatively, precytochalasin can undergo further oxidation by ccsB to yield the in-line carbonate-containing cytochalasin Z(16). Cytochalasin Z(16) is a precursor to cytochalasin E and cytochalasin K, whereas iso-precytochalasin is a precursor to cytochalasin Z(17) and rosellichalasin. The hydrolyase ccsE may catalyze hydrolysis of epoxide bond in cytochalasin E to afford cytochalasin K. The function of ccsF has not been assigned but it may play a role in post-PKS-NRPS biosynthetic step, resistance or transport of cytochalasins and related PKS-NRPS products. This Aspergillus clavatus (strain ATCC 1007 / CBS 513.65 / DSM 816 / NCTC 3887 / NRRL 1 / QM 1276 / 107) protein is Cytochrome P450 monooxygenase ccsG.